The sequence spans 643 residues: RNA-binding protein MEX3D (643 aa).

2 disordered regions span residues 1–48 (MPGS…DAAA) and 61–92 (GLGGARPGDEGMATRSADGATECGEDEPAPPD). The segment covering 18–34 (TAGDPGHPHPALAGAED) has biased composition (low complexity). Residues 83 to 92 (CGEDEPAPPD) show a composition bias toward acidic residues. KH domains follow at residues 160-221 (MTEC…KREI) and 253-314 (QTTI…REEI). Disordered regions lie at residues 357–427 (PHPG…GTAT), 471–505 (GAPAQPNTGTRRSSGGGAATTPRHSPTLPEPGGLS), and 519–583 (VGAV…APGP). Over residues 405-418 (GGSGNGGFTFGGDG) the composition is skewed to gly residues. Thr491 carries the post-translational modification Phosphothreonine. Ser495 carries the post-translational modification Phosphoserine. Low complexity-rich tracts occupy residues 495-505 (SPTLPEPGGLS), 531-556 (LPPFSGSTTFSTTPSLPSTTLASSTL), and 567-583 (PSTTAANSSASTAAPGP). An RING-type zinc finger spans residues 592–632 (CVVCSEGEAMAALVPCGHNLFCMDCAVRICGKSEPECPACR).

The protein localises to the cytoplasm. Its subcellular location is the nucleus. RNA binding protein, may be involved in post-transcriptional regulatory mechanisms. The polypeptide is RNA-binding protein MEX3D (Mex3d) (Mus musculus (Mouse)).